Here is a 78-residue protein sequence, read N- to C-terminus: uncharacterized protein (78 aa).

Residues 1 to 28 are disordered; that stretch reads MQANHSVSYLYESSTSKRSNGLFSQTQK.

This is an uncharacterized protein from Saccharomyces cerevisiae (strain ATCC 204508 / S288c) (Baker's yeast).